A 246-amino-acid chain; its full sequence is Large ribosomal subunit protein uL30 (246 aa).

Methionine 1 carries the post-translational modification N-acetylmethionine. Repeat copies occupy residues lysine 7–leucine 17, lysine 18–alanine 28, lysine 29–phenylalanine 40, and arginine 41–alanine 52. The tract at residues lysine 7–alanine 52 is 4 X 12 AA tandem repeats.

The protein belongs to the universal ribosomal protein uL30 family. As to quaternary structure, component of the large ribosomal subunit.

It localises to the cytoplasm. Component of the large ribosomal subunit. The ribosome is a large ribonucleoprotein complex responsible for the synthesis of proteins in the cell. Binds to G-rich structures in 28S rRNA and in mRNAs. Plays a regulatory role in the translation apparatus; inhibits cell-free translation of mRNAs. The sequence is that of Large ribosomal subunit protein uL30 (RPL7) from Gallus gallus (Chicken).